Reading from the N-terminus, the 295-residue chain is Ankyrin repeat and SOCS box protein 17 (295 aa).

Residues 146–176 form an ANK repeat; sequence SGITPLLYVAQTRQSNILKILLQYGILEREN. Residues 232–295 enclose the SOCS box domain; that stretch reads LGRRPIISNW…CLQNYLNLES (64 aa).

The protein belongs to the ankyrin SOCS box (ASB) family.

It participates in protein modification; protein ubiquitination. May be a substrate-recognition component of a SCF-like ECS (Elongin-Cullin-SOCS-box protein) E3 ubiquitin-protein ligase complex which mediates the ubiquitination and subsequent proteasomal degradation of target proteins. The chain is Ankyrin repeat and SOCS box protein 17 (ASB17) from Bos taurus (Bovine).